A 962-amino-acid chain; its full sequence is MTMAGGRRGLVAPQNTFLENIVRRSNDTNFVLGNAQIVDWPIVYSNDGFCKLSGYHRAEVMQKSSACSFMYGELTDKDTVEKVRQTFENYEMNSFEILMYKKNRTPVWFFVKIAPIRNEQDKVVLFLCTFSDITAFKQPIEDDSCKGWGKFARLTRALTSSRGVLQQLAPSVQKGENVHKHSRLAEVLQLGSDILPQYKQEAPKTPPHIILHYCVFKTTWDWIILILTFYTAILVPYNVSFKTRQNNVAWLVVDSIVDVIFLVDIVLNFHTTFVGPAGEVISDPKLIRMNYLKTWFVIDLLSCLPYDVINAFENVDEGISSLFSSLKVVRLLRLGRVARKLDHYIEYGAAVLVLLVCVFGLAAHWMACIWYSIGDYEIFDEDTKTIRNNSWLYQLALDIGTPYQFNGSGSGKWEGGPSKNSVYISSLYFTMTSLTSVGFGNIAPSTDIEKIFAVAIMMIGSLLYATIFGNVTTIFQQMYANTNRYHEMLNSVRDFLKLYQVPKGLSERVMDYIVSTWSMSRGIDTEKVLQICPKDMRADICVHLNRKVFKEHPAFRLASDGCLRALAMEFQTVHCAPGDLIYHAGESVDSLCFVVSGSLEVIQDDEVVAILGKGDVFGDVFWKEATLAQSCANVRALTYCDLHVIKRDALQKVLEFYTAFSHSFSRNLILTYNLRKRIVFRKISDVKREEEERMKRKNEAPLILPPDHPVRRLFQRFRQQKEARLAAERGGRDLDDLDVEKGNALTDHTSANHSLVKASVVTVRESPATPVSFQAASTSTVSDHAKLHAPGSECLGPKAGGGDPAKRKGWARFKDACGKGEDWNKVSKAESMETLPERTKASGEATLKKTDSCDSGITKSDLRLDNVGEARSPQDRSPILAEVKHSFYPIPEQTLQATVLEVKHELKEDIKALNAKMTSIEKQLSEILRILMSRGSSQSPQDTCEVSRPQSPESDRDIFGAS.

Residues 1-220 (MTMAGGRRGL…LHYCVFKTTW (220 aa)) lie on the Cytoplasmic side of the membrane. One can recognise a PAS domain in the interval 14–94 (QNTFLENIVR…QTFENYEMNS (81 aa)). The 53-residue stretch at 93–145 (NSFEILMYKKNRTPVWFFVKIAPIRNEQDKVVLFLCTFSDITAFKQPIEDDSC) folds into the PAC domain. Positions 151–162 (FARLTRALTSSR) are required for phosphatidylinositol bisphosphate binding. Residues 221–241 (DWIILILTFYTAILVPYNVSF) traverse the membrane as a helical segment. At 242–248 (KTRQNNV) the chain is on the extracellular side. A helical membrane pass occupies residues 249–269 (AWLVVDSIVDVIFLVDIVLNF). At 270–290 (HTTFVGPAGEVISDPKLIRMN) the chain is on the cytoplasmic side. The helical transmembrane segment at 291 to 309 (YLKTWFVIDLLSCLPYDVI) threads the bilayer. Topologically, residues 310–318 (NAFENVDEG) are extracellular. The helical; Voltage-sensor transmembrane segment at 319–341 (ISSLFSSLKVVRLLRLGRVARKL) threads the bilayer. The Cytoplasmic segment spans residues 342–350 (DHYIEYGAA). A helical membrane pass occupies residues 351–372 (VLVLLVCVFGLAAHWMACIWYS). Residues 373-421 (IGDYEIFDEDTKTIRNNSWLYQLALDIGTPYQFNGSGSGKWEGGPSKNS) lie on the Extracellular side of the membrane. 2 N-linked (GlcNAc...) asparagine glycosylation sites follow: N388 and N406. Residues 422–443 (VYISSLYFTMTSLTSVGFGNIA) constitute an intramembrane region (pore-forming). A Selectivity filter motif is present at residues 436–441 (SVGFGN). Residues 444-450 (PSTDIEK) lie on the Extracellular side of the membrane. Residues 451-471 (IFAVAIMMIGSLLYATIFGNV) form a helical membrane-spanning segment. Topologically, residues 472–962 (TTIFQQMYAN…ESDRDIFGAS (491 aa)) are cytoplasmic. The calmodulin-binding stretch occupies residues 646 to 743 (KRDALQKVLE…LDDLDVEKGN (98 aa)). The interaction with cyclic nucleotide-binding pocket stretch occupies residues 672–674 (YNL). Over residues 830–852 (ESMETLPERTKASGEATLKKTDS) the composition is skewed to basic and acidic residues. Disordered stretches follow at residues 830-859 (ESME…GITK) and 933-962 (SRGS…FGAS). The tract at residues 897-937 (ATVLEVKHELKEDIKALNAKMTSIEKQLSEILRILMSRGSS) is CAD (involved in subunit assembly). Residues 934–952 (RGSSQSPQDTCEVSRPQSP) show a composition bias toward polar residues. A phosphoserine mark is found at S947, S951, and S954. Residues 953 to 962 (ESDRDIFGAS) show a composition bias toward basic and acidic residues.

This sequence belongs to the potassium channel family. H (Eag) (TC 1.A.1.20) subfamily. Kv10.1/KCNH1 sub-subfamily. Homomultimer. The potassium channel is composed of a homo- or heterotetrameric complex of pore-forming alpha subunits that can associate with modulating beta subunits. Heteromultimer with KCNH5/EAG2. Interacts with ALG10B. Interacts with RABEP1. Interacts (via C-terminus) with CTTN. Interacts (via cytoplasmic region) with Ca(2+)-bound calmodulin. In terms of processing, channel activity is regulated via tyrosine phosphorylation/dephosphorylation by SRC and PTPN6. As to expression, detected in cerebellum, at parallel fiber synapses on Purkinje cell spines. Detected in hippocampus neurons (at protein level). Detected in brain, but not in the other tissues tested; expression is highest in granular cells of the dentate gyrus, in hippocampus CA3 pyramidal cells, and in cerebellar granule cells. Detected in pituitary.

The protein resides in the cell membrane. It is found in the nucleus inner membrane. Its subcellular location is the cell projection. It localises to the dendrite. The protein localises to the axon. The protein resides in the presynaptic cell membrane. It is found in the perikaryon. Its subcellular location is the postsynaptic density membrane. It localises to the early endosome membrane. The catalysed reaction is K(+)(in) = K(+)(out). Its activity is regulated as follows. Channel activity is inhibited by interaction with Ca(2+)-bound calmodulin. Interaction of a single pore-forming alpha subunit with a calmodulin chain is sufficient to promote channel closure. Channel activity is not regulated by cyclic nucleotides. Channel activity is inhibited by binding intracellular phosphatidylinositol-3,5-bisphosphate and phosphatidylinositol-4,5-bisphosphate (PIP2), but is not inhibited by phosphatidylinositol 4-phosphate. In terms of biological role, pore-forming (alpha) subunit of a voltage-gated delayed rectifier potassium channel that mediates outward-rectifying potassium currents which, on depolarization, reaches a steady-state level and do not inactivate. The activation kinetics depend on the prepulse potential and external divalent cation concentration. With negative prepulses, the current activation is delayed and slowed down several fold, whereas more positive prepulses speed up activation. The time course of activation is biphasic with a fast and a slowly activating current component. Activates at more positive membrane potentials and exhibit a steeper activation curve. Channel properties are modulated by subunit assembly. Mediates IK(NI) current in myoblasts. Involved in the regulation of cell proliferation and differentiation, in particular adipogenic and osteogenic differentiation in bone marrow-derived mesenchymal stem cells (MSCs). This Rattus norvegicus (Rat) protein is Voltage-gated delayed rectifier potassium channel KCNH1.